The chain runs to 619 residues: CREB-regulated transcription coactivator 3 (619 aa).

Residues 1–103 (MAASPGSGSA…LVERPSRNRF (103 aa)) form a required for interaction with HTLV-1 TAX region. Residues S4 and S62 each carry the phosphoserine modification. The tract at residues 103 to 150 (FHPLHRRSGDKPGRQFDGSAFGANYSSQPLDESWPRQQPPWKDEKHPG) is disordered. Residue T160 is modified to Phosphothreonine. S162 carries the phosphoserine; by SIK2 modification. Residues 165-175 (ALHTSALSTKP) are compositionally biased toward polar residues. The tract at residues 165 to 185 (ALHTSALSTKPQDPYGGGGQS) is disordered. Residue K232 forms a Glycyl lysine isopeptide (Lys-Gly) (interchain with G-Cter in SUMO2) linkage. Residues S273, S329, S332, S370, S391, S396, S410, and S443 each carry the phosphoserine modification. A disordered region spans residues 375 to 431 (STTNLSGPSRRRQPPVSPLTLSPGPEAHQGFSRQLSSTSPLAPYPTSQMVSSDRSQL). Residues 380 to 401 (SGPSRRRQPPVSPLTLSPGPEA) are required for interaction with PPP2CA and PPP2R1A. A compositionally biased stretch (polar residues) spans 405–431 (FSRQLSSTSPLAPYPTSQMVSSDRSQL).

It belongs to the TORC family. As to quaternary structure, binding, as a tetramer, through its N-terminal region, with the bZIP domain of CREB1 enhances recruitment of TAF4 to the promoter. 'Arg-314' in the bZIP domain of CREB1 is essential for this interaction. Interacts (when phosphorylated at Ser-162 and Se-273) with 14-3-3 proteins. Interacts with YWHAE. Interacts (when phosphorylated at Ser-391) with phosphatase PP2A catalytic subunit PPP2CA and regulatory subunits PPP2R1A and PPP2R2A. Interacts, via the N-terminal with the ankyrin repeats of BCL3, to form a complex with CREB1 on CRE and TxRE responsive elements and represses HTLV-1 LTR-mediated transcription. (Microbial infection) Interacts with HTLV-1 protein Tax; this interaction enhances tax transcriptional activity. In terms of processing, phosphorylation/dephosphorylation states of Ser-273 are required for regulating transduction of CREB activity. CRTCs/TORCs are inactive when phosphorylated, and active when dephosphorylated at this site. May be phosphorylated at Ser-391 by MAPK3/ERK1 and/or MAPK1/ERK2 or by some cyclin-dependent kinases such as CDK1,CDK2 or CDK5. Following adenylyl cyclase activation, dephosphorylated at Ser-162 and Ser-273 resulting in its dissociation from 14-3-3 proteins probably promoting CRTC3 translocation into the nucleus. In terms of tissue distribution, predominantly expressed in B and T lymphocytes. Highest levels in lung. Also expressed in brain, colon, heart, kidney, ovary, and prostate. Weak expression in liver, pancreas, muscle, small intestine, spleen and stomach.

It is found in the nucleus. Its subcellular location is the cytoplasm. In terms of biological role, transcriptional coactivator for CREB1 which activates transcription through both consensus and variant cAMP response element (CRE) sites. Acts as a coactivator, in the SIK/TORC signaling pathway, being active when dephosphorylated and acts independently of CREB1 'Ser-133' phosphorylation. Enhances the interaction of CREB1 with TAF4. Regulates the expression of specific CREB-activated genes such as the steroidogenic gene, StAR. Potent coactivator of PPARGC1A and inducer of mitochondrial biogenesis in muscle cells. Also coactivator for TAX activation of the human T-cell leukemia virus type 1 (HTLV-1) long terminal repeats (LTR). This chain is CREB-regulated transcription coactivator 3 (CRTC3), found in Homo sapiens (Human).